The sequence spans 696 residues: Interleukin-1 receptor accessory protein-like 1 (696 aa).

The signal sequence occupies residues 1 to 18 (MKAPIPHLILLYATFTQS). The region spanning 19-134 (LKVVTKRGSA…YCMKVSISLT (116 aa)) is the Ig-like C2-type 1 domain. At 19–357 (LKVVTKRGSA…LLHKRELMYT (339 aa)) the chain is on the extracellular side. Cystine bridges form between cysteine 31–cysteine 126 and cysteine 53–cysteine 118. N-linked (GlcNAc...) asparagine glycosylation is found at asparagine 63, asparagine 122, and asparagine 138. 2 disulfides stabilise this stretch: cysteine 143/cysteine 185 and cysteine 164/cysteine 216. Ig-like C2-type domains are found at residues 143–232 (CYNS…TELT) and 242–350 (PKLL…VLLH). N-linked (GlcNAc...) asparagine glycosylation is found at asparagine 213, asparagine 264, and asparagine 331. Cysteine 267 and cysteine 334 are disulfide-bonded. The helical transmembrane segment at 358–378 (VELAGGLGAILLLLVCLVTIY) threads the bilayer. Over 379-696 (KCYKIEIMLF…RETSISSVIW (318 aa)) the chain is Cytoplasmic. The TIR domain maps to 403–559 (KDYDAYLSYT…KFWKRLQYEM (157 aa)). Glutamate 491 is an active-site residue. The interval 549 to 644 (SKFWKRLQYE…TGTLPLTSIG (96 aa)) is interaction with NCS1. Residues 659–680 (GQRPQTKSSREQNPDEAHTNSA) form a disordered region. Residues 666–676 (SSREQNPDEAH) are compositionally biased toward basic and acidic residues.

The protein belongs to the interleukin-1 receptor family. Homodimer. Interacts (calcium-independent) with NCS1. Interacts (via the first immunoglobilin domain) with PTPRD (via the second immunoglobilin domain); this interaction is PTPRD-splicing-dependent and induces pre- and post-synaptic differentiation of neurons and is required for IL1RAPL1-mediated synapse formation. As to expression, detected at low levels in heart, skeletal muscle, ovary, skin, amygdala, caudate nucleus, corpus callosum, hippocampus, substantia nigra and thalamus. Detected at very low levels in tonsil, prostate, testis, small intestine, placenta, colon and fetal liver.

Its subcellular location is the cell membrane. It is found in the cytoplasm. The protein localises to the cell projection. It localises to the axon. The protein resides in the dendrite. It carries out the reaction NAD(+) + H2O = ADP-D-ribose + nicotinamide + H(+). Functionally, may regulate secretion and presynaptic differentiation through inhibition of the activity of N-type voltage-gated calcium channel. May activate the MAP kinase JNK. Plays a role in neurite outgrowth. During dendritic spine formation can bidirectionally induce pre- and post-synaptic differentiation of neurons by trans-synaptically binding to PTPRD. The protein is Interleukin-1 receptor accessory protein-like 1 (IL1RAPL1) of Homo sapiens (Human).